The chain runs to 404 residues: Biflaviolin synthase CYP158A2 (404 aa).

2 residues coordinate flaviolin: R288 and L293. C353 serves as a coordination point for heme.

Belongs to the cytochrome P450 family. Heme serves as cofactor.

It carries out the reaction 2 flaviolin + 2 reduced [2Fe-2S]-[ferredoxin] + O2 + H(+) = 3,3'-biflaviolin + 2 oxidized [2Fe-2S]-[ferredoxin] + 2 H2O. The enzyme catalyses 2 flaviolin + 2 reduced [2Fe-2S]-[ferredoxin] + O2 + H(+) = 3,8'-biflaviolin + 2 oxidized [2Fe-2S]-[ferredoxin] + 2 H2O. It participates in pigment biosynthesis. Functionally, catalyzes oxidative C-C coupling reaction to polymerize flaviolin and form highly conjugated pigments which protect the soil bacterium from deleterious effects of UV irradiation (three isomers of biflaviolin and one triflaviolin). The chain is Biflaviolin synthase CYP158A2 from Streptomyces coelicolor (strain ATCC BAA-471 / A3(2) / M145).